The chain runs to 162 residues: Phosphopantetheine adenylyltransferase (162 aa).

T9 contributes to the substrate binding site. ATP is bound by residues 9-10 (TF) and H17. Residues K41, L73, and R87 each coordinate substrate. ATP-binding positions include 88–90 (GLR), E98, and 123–129 (FAFLSST).

Belongs to the bacterial CoaD family. Homohexamer. Mg(2+) is required as a cofactor.

The protein localises to the cytoplasm. It catalyses the reaction (R)-4'-phosphopantetheine + ATP + H(+) = 3'-dephospho-CoA + diphosphate. It participates in cofactor biosynthesis; coenzyme A biosynthesis; CoA from (R)-pantothenate: step 4/5. Reversibly transfers an adenylyl group from ATP to 4'-phosphopantetheine, yielding dephospho-CoA (dPCoA) and pyrophosphate. In Vibrio atlanticus (strain LGP32) (Vibrio splendidus (strain Mel32)), this protein is Phosphopantetheine adenylyltransferase.